A 350-amino-acid chain; its full sequence is Phenylalanine--tRNA ligase alpha subunit (350 aa).

E260 lines the Mg(2+) pocket.

The protein belongs to the class-II aminoacyl-tRNA synthetase family. Phe-tRNA synthetase alpha subunit type 1 subfamily. Tetramer of two alpha and two beta subunits. Requires Mg(2+) as cofactor.

Its subcellular location is the cytoplasm. The enzyme catalyses tRNA(Phe) + L-phenylalanine + ATP = L-phenylalanyl-tRNA(Phe) + AMP + diphosphate + H(+). This Mesoplasma florum (strain ATCC 33453 / NBRC 100688 / NCTC 11704 / L1) (Acholeplasma florum) protein is Phenylalanine--tRNA ligase alpha subunit.